The following is a 154-amino-acid chain: Deoxyuridine 5'-triphosphate nucleotidohydrolase (154 aa).

Substrate-binding positions include 64–66, Asn77, 81–83, and Lys91; these read RSG and TID.

Belongs to the dUTPase family. Homotrimer. Mg(2+) is required as a cofactor.

The catalysed reaction is dUTP + H2O = dUMP + diphosphate + H(+). It participates in pyrimidine metabolism; dUMP biosynthesis; dUMP from dCTP (dUTP route): step 2/2. This enzyme is involved in nucleotide metabolism: it produces dUMP, the immediate precursor of thymidine nucleotides and it decreases the intracellular concentration of dUTP so that uracil cannot be incorporated into DNA. The sequence is that of Deoxyuridine 5'-triphosphate nucleotidohydrolase from Mycobacterium avium (strain 104).